Reading from the N-terminus, the 142-residue chain is Nucleoside diphosphate kinase (142 aa).

Lys-11, Phe-59, Arg-87, Thr-93, Arg-104, and Asn-114 together coordinate ATP. His-117 functions as the Pros-phosphohistidine intermediate in the catalytic mechanism.

Belongs to the NDK family. In terms of assembly, homotetramer. Requires Mg(2+) as cofactor.

It is found in the cytoplasm. The enzyme catalyses a 2'-deoxyribonucleoside 5'-diphosphate + ATP = a 2'-deoxyribonucleoside 5'-triphosphate + ADP. The catalysed reaction is a ribonucleoside 5'-diphosphate + ATP = a ribonucleoside 5'-triphosphate + ADP. In terms of biological role, major role in the synthesis of nucleoside triphosphates other than ATP. The ATP gamma phosphate is transferred to the NDP beta phosphate via a ping-pong mechanism, using a phosphorylated active-site intermediate. The chain is Nucleoside diphosphate kinase from Hahella chejuensis (strain KCTC 2396).